A 443-amino-acid chain; its full sequence is Nuclear distribution protein nudF (443 aa).

A LisH domain is found at 9-41 (QAEELHKSIIAYLSSINASRSCEVLREELQVDS). The stretch at 60–87 (TGIARLQKKILDLESKLAGLQTELDTIS) forms a coiled coil. WD repeat units lie at residues 111 to 152 (SHRD…RTLK), 154 to 194 (HMRP…ANVR), 198 to 238 (GHDH…CVKV), 241 to 280 (SQGS…SVAS), 283 to 343 (GHEN…IKTL), 345 to 384 (GHDN…RLVK), 388 to 427 (AHGH…PGFQ), and 429 to 443 (VIAT…RIFT).

Belongs to the WD repeat LIS1/nudF family. Self-associates. Interacts with nudE and dynein.

The protein localises to the cytoplasm. The protein resides in the cytoskeleton. Its subcellular location is the spindle pole. Functionally, positively regulates the activity of the minus-end directed microtubule motor protein dynein. May enhance dynein-mediated microtubule sliding by targeting dynein to the microtubule plus end. Required for nuclear migration during vegetative growth as well as development. Required for retrograde early endosome (EE) transport from the hyphal tip. Required for localization of dynein to the mitotic spindle poles. Recruits additional proteins to the dynein complex at SPBs. This Aspergillus niger (strain ATCC MYA-4892 / CBS 513.88 / FGSC A1513) protein is Nuclear distribution protein nudF.